We begin with the raw amino-acid sequence, 1476 residues long: ABC-type transporter FG02316 (1476 aa).

N-linked (GlcNAc...) asparagine glycosylation is present at Asn-2. Helical transmembrane passes span 23-43 (FTLL…LLLA), 64-84 (WLYC…AFLV), 97-117 (SLPA…LSYV), 156-176 (AAIT…AETI), 266-286 (ILFI…QPFL), 305-325 (QGYG…VTTG), 384-404 (VWAN…QLGL), 407-427 (LIPV…VSFV), 485-505 (LLIW…VLSF), and 532-552 (LFAL…SFMG). Residues 274-552 (LCFIGFTFCQ…FVTSLSSFMG (279 aa)) enclose the ABC transmembrane type-1 1 domain. Positions 586 to 615 (ISGVSSSEEKHPVSPIQESMMKTEPSGDSP) are disordered. The region spanning 622-847 (IRNASFGYDR…SDNYVSHSDV (226 aa)) is the ABC transporter 1 domain. N-linked (GlcNAc...) asparagine glycosylation occurs at Asn-624. 654-661 (GPVGSGKS) is a binding site for ATP. Residues Asn-682, Asn-696, Asn-798, and Asn-836 are each glycosylated (N-linked (GlcNAc...) asparagine). A disordered region spans residues 842-870 (VSHSDVSSPDGARSKAPSSGPASSSAPVP). Over residues 855–870 (SKAPSSGPASSSAPVP) the composition is skewed to low complexity. The next 6 helical transmembrane spans lie at 906–926 (MNAI…AYIF), 950–970 (LGYY…FLVL), 1021–1041 (LIDM…VLCI), 1045–1065 (ILIA…LATL), 1137–1157 (WLTL…VVLV), and 1167–1187 (GLIG…KLLM). In terms of domain architecture, ABC transmembrane type-1 2 spans 916–1195 (VFVLAICAYI…LMTFWTTLET (280 aa)). The 233-residue stretch at 1232–1464 (ILFDQVSAGY…GPDASTFASM (233 aa)) folds into the ABC transporter 2 domain. Asn-1250 carries N-linked (GlcNAc...) asparagine glycosylation. 1265-1272 (GRTGSGKS) contacts ATP. N-linked (GlcNAc...) asparagine glycosylation occurs at Asn-1414.

It belongs to the ABC transporter superfamily. ABCC family. Conjugate transporter (TC 3.A.1.208) subfamily.

It is found in the cell membrane. Functionally, ABC-type transporter; part of the gene cluster that mediates the biosynthesis of the fusahexin, a cyclic hydrophobic hexapeptide with the amino acid sequence cyclo-(D-Ala-L-Leu-D-allo-Thr-L-Pro-D-Leu-L-Leu) that plays an important role in cell surface hydrophobicity. The polypeptide is ABC-type transporter FG02316 (Gibberella zeae (strain ATCC MYA-4620 / CBS 123657 / FGSC 9075 / NRRL 31084 / PH-1) (Wheat head blight fungus)).